A 300-amino-acid polypeptide reads, in one-letter code: Cis-3-alkyl-4-alkyloxetan-2-one decarboxylase (300 aa).

In terms of domain architecture, AB hydrolase-1 spans 33-282; that stretch reads VVVMLHGNPS…DDANHYVLED (250 aa).

The protein belongs to the AB hydrolase superfamily. As to quaternary structure, homotetramer. Forms a complex with OleC and OleD.

It is found in the cytoplasm. The enzyme catalyses a cis-3-alkyl-4-alkyloxetan-2-one = a cis-alkene + CO2. Its function is as follows. Involved in olefin biosynthesis. Catalyzes the elimination of carbon dioxide from beta-lactones to form the final olefin product. In Xanthomonas campestris pv. campestris (strain ATCC 33913 / DSM 3586 / NCPPB 528 / LMG 568 / P 25), this protein is Cis-3-alkyl-4-alkyloxetan-2-one decarboxylase.